The sequence spans 150 residues: Large ribosomal subunit protein bL9 (150 aa).

Belongs to the bacterial ribosomal protein bL9 family.

Binds to the 23S rRNA. The sequence is that of Large ribosomal subunit protein bL9 from Herminiimonas arsenicoxydans.